A 316-amino-acid polypeptide reads, in one-letter code: Neuroguidin (316 aa).

Disordered regions lie at residues 143 to 172 (SEAD…VKKY) and 280 to 316 (SALT…RKRH). Residues 145–157 (ADEGESDSGEDCA) show a composition bias toward acidic residues. A compositionally biased stretch (basic residues) spans 297–316 (KKSRKGPKKSKKRKGFRKRH).

The protein belongs to the SAS10 family. In terms of assembly, part of the small subunit (SSU) processome, composed of more than 70 proteins and the RNA chaperone small nucleolar RNA (snoRNA) U3.

It localises to the nucleus. The protein localises to the nucleolus. The protein resides in the chromosome. It is found in the centromere. Its subcellular location is the cytoplasm. It localises to the cell projection. The protein localises to the axon. The protein resides in the dendrite. It is found in the filopodium. Functionally, part of the small subunit (SSU) processome, first precursor of the small eukaryotic ribosomal subunit. During the assembly of the SSU processome in the nucleolus, many ribosome biogenesis factors, an RNA chaperone and ribosomal proteins associate with the nascent pre-rRNA and work in concert to generate RNA folding, modifications, rearrangements and cleavage as well as targeted degradation of pre-ribosomal RNA by the RNA exosome. Its dissociation from the complex determines the transition from state pre-A1 to state pre-A1*. May inhibit mRNA translation. The sequence is that of Neuroguidin (ngdn) from Xenopus tropicalis (Western clawed frog).